We begin with the raw amino-acid sequence, 474 residues long: tRNA-2-methylthio-N(6)-dimethylallyladenosine synthase (474 aa).

One can recognise an MTTase N-terminal domain in the interval Lys-3–Glu-120. The [4Fe-4S] cluster site is built by Cys-12, Cys-49, Cys-83, Cys-157, Cys-161, and Cys-164. The Radical SAM core domain maps to Arg-143–Glu-375. The TRAM domain occupies Arg-378–Arg-441.

This sequence belongs to the methylthiotransferase family. MiaB subfamily. Monomer. The cofactor is [4Fe-4S] cluster.

The protein resides in the cytoplasm. The catalysed reaction is N(6)-dimethylallyladenosine(37) in tRNA + (sulfur carrier)-SH + AH2 + 2 S-adenosyl-L-methionine = 2-methylsulfanyl-N(6)-dimethylallyladenosine(37) in tRNA + (sulfur carrier)-H + 5'-deoxyadenosine + L-methionine + A + S-adenosyl-L-homocysteine + 2 H(+). Its function is as follows. Catalyzes the methylthiolation of N6-(dimethylallyl)adenosine (i(6)A), leading to the formation of 2-methylthio-N6-(dimethylallyl)adenosine (ms(2)i(6)A) at position 37 in tRNAs that read codons beginning with uridine. This chain is tRNA-2-methylthio-N(6)-dimethylallyladenosine synthase, found in Yersinia pseudotuberculosis serotype O:3 (strain YPIII).